A 244-amino-acid polypeptide reads, in one-letter code: 5'-deoxynucleotidase (244 aa).

It carries out the reaction a 2'-deoxyribonucleoside 5'-phosphate + H2O = a 2'-deoxyribonucleoside + phosphate. Following host DNA degradation, is responsible for the degradation of 5'-dNMP's to deoxynucleosides that can be further excreted. Active on deoxynucleoside 5'-monophosphates but not active as a phosphatase on ribonucleotides, deoxynucleoside 5'-triphosphates, deoxynucleoside 3'-monophosphates, or deoxyoligonucleotides. The sequence is that of 5'-deoxynucleotidase (dmp) from Escherichia coli (Enterobacteria phage T5).